Consider the following 185-residue polypeptide: Ribosome-recycling factor (185 aa).

The protein belongs to the RRF family.

The protein resides in the cytoplasm. In terms of biological role, responsible for the release of ribosomes from messenger RNA at the termination of protein biosynthesis. May increase the efficiency of translation by recycling ribosomes from one round of translation to another. The sequence is that of Ribosome-recycling factor from Sulfurovum sp. (strain NBC37-1).